We begin with the raw amino-acid sequence, 197 residues long: Large ribosomal subunit protein uL13A (197 aa).

Residue Ser-151 is modified to Phosphoserine.

It belongs to the universal ribosomal protein uL13 family. As to quaternary structure, component of the large ribosomal subunit (LSU). Mature yeast ribosomes consist of a small (40S) and a large (60S) subunit. The 40S small subunit contains 1 molecule of ribosomal RNA (18S rRNA) and at least 33 different proteins. The large 60S subunit contains 3 rRNA molecules (25S, 5.8S and 5S rRNA) and at least 46 different proteins.

The protein localises to the cytoplasm. The protein resides in the nucleus. It localises to the nucleolus. Component of the ribosome, a large ribonucleoprotein complex responsible for the synthesis of proteins in the cell. The small ribosomal subunit (SSU) binds messenger RNAs (mRNAs) and translates the encoded message by selecting cognate aminoacyl-transfer RNA (tRNA) molecules. The large subunit (LSU) contains the ribosomal catalytic site termed the peptidyl transferase center (PTC), which catalyzes the formation of peptide bonds, thereby polymerizing the amino acids delivered by tRNAs into a polypeptide chain. The nascent polypeptides leave the ribosome through a tunnel in the LSU and interact with protein factors that function in enzymatic processing, targeting, and the membrane insertion of nascent chains at the exit of the ribosomal tunnel. This Schizosaccharomyces pombe (strain 972 / ATCC 24843) (Fission yeast) protein is Large ribosomal subunit protein uL13A (rpl1602).